A 150-amino-acid chain; its full sequence is 3-dehydroquinate dehydratase (150 aa).

The active-site Proton acceptor is Tyr-26. 3 residues coordinate substrate: Asn-77, His-83, and Asp-90. His-103 (proton donor) is an active-site residue. Residues 104 to 105 (LS) and Arg-114 each bind substrate.

Belongs to the type-II 3-dehydroquinase family. As to quaternary structure, homododecamer.

The catalysed reaction is 3-dehydroquinate = 3-dehydroshikimate + H2O. The protein operates within metabolic intermediate biosynthesis; chorismate biosynthesis; chorismate from D-erythrose 4-phosphate and phosphoenolpyruvate: step 3/7. Catalyzes a trans-dehydration via an enolate intermediate. The polypeptide is 3-dehydroquinate dehydratase (Pseudoalteromonas translucida (strain TAC 125)).